We begin with the raw amino-acid sequence, 368 residues long: uncharacterized protein (368 aa).

Positions 3–120 constitute a Response regulatory domain; the sequence is KILLADDERI…QIISSLEEII (118 aa). Residue aspartate 55 is modified to 4-aspartylphosphate. The HTH araC/xylS-type domain maps to 259–361; sequence SKMIRLIADE…GLTPSEFRRK (103 aa). 2 consecutive DNA-binding regions (H-T-H motif) follow at residues 278 to 299 and 327 to 351; these read WAAK…KQET and VSEI…KKYT.

In terms of processing, phosphorylated by YesM.

The protein resides in the cytoplasm. In terms of biological role, member of the two-component regulatory system YesM/YesN. This is an uncharacterized protein from Bacillus subtilis (strain 168).